The following is a 149-amino-acid chain: Calmodulin-3 (149 aa).

Ala2 bears the N-acetylalanine mark. EF-hand domains are found at residues 8 to 43 (DQIA…LGQN), 44 to 79 (PTEA…KMKD), 81 to 116 (DSEE…LGEK), and 117 to 149 (LTDE…MMAK). Positions 21, 23, 25, 27, 32, 57, 59, 61, 63, 68, 94, 96, 98, and 105 each coordinate Ca(2+). Lys116 is subject to N6,N6,N6-trimethyllysine. 5 residues coordinate Ca(2+): Asp130, Asp132, Asp134, Gln136, and Glu141.

Belongs to the calmodulin family.

Calmodulin mediates the control of a large number of enzymes, ion channels and other proteins by Ca(2+). Among the enzymes to be stimulated by the calmodulin-Ca(2+) complex are a number of protein kinases and phosphatases. The polypeptide is Calmodulin-3 (CAM3) (Oryza sativa subsp. japonica (Rice)).